An 89-amino-acid polypeptide reads, in one-letter code: Meiosis expressed gene 1 protein homolog (89 aa).

It belongs to the MEIG1 family.

In Nematostella vectensis (Starlet sea anemone), this protein is Meiosis expressed gene 1 protein homolog.